Consider the following 340-residue polypeptide: Anthranilate phosphoribosyltransferase (340 aa).

Residues Gly83, 86-87 (GD), Thr91, 93-96 (NIST), 111-119 (KHGNRSITS), and Ser123 contribute to the 5-phospho-alpha-D-ribose 1-diphosphate site. Residue Gly83 participates in anthranilate binding. Ser95 serves as a coordination point for Mg(2+). Asn114 is a binding site for anthranilate. Arg169 is a binding site for anthranilate. Mg(2+) contacts are provided by Asp228 and Glu229.

The protein belongs to the anthranilate phosphoribosyltransferase family. Homodimer. It depends on Mg(2+) as a cofactor.

It carries out the reaction N-(5-phospho-beta-D-ribosyl)anthranilate + diphosphate = 5-phospho-alpha-D-ribose 1-diphosphate + anthranilate. The protein operates within amino-acid biosynthesis; L-tryptophan biosynthesis; L-tryptophan from chorismate: step 2/5. Its function is as follows. Catalyzes the transfer of the phosphoribosyl group of 5-phosphorylribose-1-pyrophosphate (PRPP) to anthranilate to yield N-(5'-phosphoribosyl)-anthranilate (PRA). The chain is Anthranilate phosphoribosyltransferase from Solibacter usitatus (strain Ellin6076).